We begin with the raw amino-acid sequence, 234 residues long: Sugar fermentation stimulation protein homolog (234 aa).

Belongs to the SfsA family.

This chain is Sugar fermentation stimulation protein homolog, found in Shewanella sp. (strain ANA-3).